We begin with the raw amino-acid sequence, 125 residues long: MARIAGVNIPTNKRVAISLRYIYGIGPAQAQKICTELSIPDERRVNQLSDDEILRIRELIDREYRVEGDLRREVAMNIKRLMDLGCYRGLRHRRGLPVRGQRTHTNARTRKGKAVAIAGKKKVTR.

The protein belongs to the universal ribosomal protein uS13 family. As to quaternary structure, part of the 30S ribosomal subunit. Forms a loose heterodimer with protein S19. Forms two bridges to the 50S subunit in the 70S ribosome.

Its function is as follows. Located at the top of the head of the 30S subunit, it contacts several helices of the 16S rRNA. In the 70S ribosome it contacts the 23S rRNA (bridge B1a) and protein L5 of the 50S subunit (bridge B1b), connecting the 2 subunits; these bridges are implicated in subunit movement. Contacts the tRNAs in the A and P-sites. This is Small ribosomal subunit protein uS13 from Granulibacter bethesdensis (strain ATCC BAA-1260 / CGDNIH1).